An 886-amino-acid chain; its full sequence is Probable mixed-linked glucan synthase 8 (886 aa).

Helical transmembrane passes span 87–107 and 118–138; these read ILLHPYRLLTLVRLVAIVLFF and GMFFWWISVIGDFWFGVSWLL. The active site involves D213. Substrate is bound by residues D413 and D415. The active site involves D577. A run of 6 helical transmembrane segments spans residues 659–679, 683–703, 723–743, 775–795, 812–832, and 840–860; these read VFLLFYLLFPVIWIFRGIFYI, FPTYVLYLVIVIFMSEMIGMV, IIGATAVYPLAVLHIVLKCFG, LLFPTIVVIAVNICAIGAAIG, LGLVFNVWILLLIYPFALGIM, and YILFVLIVISFVIIALADIAI.

It belongs to the glycosyltransferase 2 family. Plant cellulose synthase-like F subfamily.

It is found in the golgi apparatus membrane. May catalyze both beta-1,3 and beta-1,4 glycosidic linkage on beta-D-glucan. Essential for (1,3;1,4)-beta-D-glucans synthesis in grasses and cereals (Poaceae). The mixed-linked glucans (which are not present in walls of dicotyledons or most other monocotyledonous plants) are particularly important constituents of the walls of the starchy endosperm and aleurone cells of cereal grains such as oats, wheat, rice and barley. They can account for up to 70% by weight of the wall. This Oryza sativa subsp. japonica (Rice) protein is Probable mixed-linked glucan synthase 8 (CSFL8).